Consider the following 147-residue polypeptide: Ponticulin-like protein C3 (147 aa).

An N-terminal signal peptide occupies residues 1 to 20 (MKFTKSLLLLIVAVFASSNA). Asn-118 carries GPI-like-anchor amidated asparagine lipidation. A glycan (N-linked (GlcNAc...) asparagine) is linked at Asn-118. Positions 119–147 (SSESDSSDSTRIGASFALFALALLSMLAL) are cleaved as a propeptide — removed in mature form.

This sequence belongs to the ponticulin family. The GPI-like-anchor contains a phosphoceramide group, rather than a phosphatidyl group.

Its subcellular location is the cell membrane. This is Ponticulin-like protein C3 (ponC3) from Dictyostelium discoideum (Social amoeba).